A 420-amino-acid polypeptide reads, in one-letter code: Protein-lysine N-trimethyltransferase SMYD5 (420 aa).

In terms of domain architecture, SET spans 29-358; it reads AEARFISSAK…AGEEICISYL (330 aa). The MYND-type zinc finger occupies 104–142; the sequence is PEQCSIRKDLHQQCPRCQVTYCSAECRQAALEQYHQVLC. Residue Tyr-357 coordinates S-adenosyl-L-methionine. Residues 392–420 are disordered; sequence DDPDVTSDEEEEAEGETDDAELEDEMTDV.

This sequence belongs to the class V-like SAM-binding methyltransferase superfamily.

It is found in the cytoplasm. It catalyses the reaction L-lysyl-[protein] + 3 S-adenosyl-L-methionine = N(6),N(6),N(6)-trimethyl-L-lysyl-[protein] + 3 S-adenosyl-L-homocysteine + 3 H(+). It carries out the reaction L-lysyl(20)-[histone H4] + 3 S-adenosyl-L-methionine = N(6),N(6),N(6)-trimethyl-L-lysyl(20)-[histone H4] + 3 S-adenosyl-L-homocysteine + 3 H(+). The enzyme catalyses L-lysyl(36)-[histone H3] + 3 S-adenosyl-L-methionine = N(6),N(6),N(6)-trimethyl-L-lysyl(36)-[histone H3] + 3 S-adenosyl-L-homocysteine + 3 H(+). Functionally, protein-lysine N-trimethyltransferase that specifically catalyzes trimethylation of 'Lys-22' of the RPL40/eL40 subunit of the 60S ribosome, thereby promoting translation elongation and protein synthesis. May also act as a histone methyltransferase in the context of histone octamers, but not on nucleosome substrates: trimethylates 'Lys-36' of histone H3 and 'Lys-20' of histone H4 to form H3K36me3 and H4K20me3, respectively. The histone methyltransferase activity, which is independent of its SET domain, is however unsure in vivo. The protein is Protein-lysine N-trimethyltransferase SMYD5 (SMYD5) of Gallus gallus (Chicken).